Reading from the N-terminus, the 426-residue chain is 3-phosphoshikimate 1-carboxyvinyltransferase (426 aa).

3-phosphoshikimate is bound by residues lysine 22, serine 23, and arginine 27. Lysine 22 is a phosphoenolpyruvate binding site. Phosphoenolpyruvate-binding residues include glycine 96 and arginine 124. 3-phosphoshikimate contacts are provided by serine 170, serine 171, glutamine 172, serine 198, aspartate 314, asparagine 337, and lysine 341. A phosphoenolpyruvate-binding site is contributed by glutamine 172. Aspartate 314 acts as the Proton acceptor in catalysis. Residues arginine 345, arginine 387, and lysine 412 each contribute to the phosphoenolpyruvate site.

It belongs to the EPSP synthase family. Monomer.

Its subcellular location is the cytoplasm. The enzyme catalyses 3-phosphoshikimate + phosphoenolpyruvate = 5-O-(1-carboxyvinyl)-3-phosphoshikimate + phosphate. Its pathway is metabolic intermediate biosynthesis; chorismate biosynthesis; chorismate from D-erythrose 4-phosphate and phosphoenolpyruvate: step 6/7. Its function is as follows. Catalyzes the transfer of the enolpyruvyl moiety of phosphoenolpyruvate (PEP) to the 5-hydroxyl of shikimate-3-phosphate (S3P) to produce enolpyruvyl shikimate-3-phosphate and inorganic phosphate. The protein is 3-phosphoshikimate 1-carboxyvinyltransferase of Shewanella halifaxensis (strain HAW-EB4).